We begin with the raw amino-acid sequence, 113 residues long: Class I hydrophobin 1 (113 aa).

The first 17 residues, 1–17 (MQFKFLSTVALATLAVA), serve as a signal peptide directing secretion. 4 disulfide bridges follow: cysteine 32–cysteine 92, cysteine 39–cysteine 86, cysteine 40–cysteine 73, and cysteine 93–cysteine 106.

Belongs to the fungal hydrophobin family. As to quaternary structure, self-assembles to form functional amyloid fibrils called rodlets. Self-assembly into fibrillar rodlets occurs spontaneously at hydrophobic:hydrophilic interfaces and the rodlets further associate laterally to form amphipathic monolayers.

The protein resides in the secreted. Its subcellular location is the cell wall. Its function is as follows. Aerial growth, conidiation, and dispersal of filamentous fungi in the environment rely upon a capability of their secreting small amphipathic proteins called hydrophobins (HPBs) with low sequence identity. Class I can self-assemble into an outermost layer of rodlet bundles on aerial cell surfaces, conferring cellular hydrophobicity that supports fungal growth, development and dispersal; whereas Class II form highly ordered films at water-air interfaces through intermolecular interactions but contribute nothing to the rodlet structure. CoH1 is an asexual monokaryon-specific class I hydrophobin that is involved in aerial growth of mycelia. This is Class I hydrophobin 1 from Coprinopsis cinerea (Inky cap fungus).